The following is a 138-amino-acid chain: ATP synthase epsilon chain (138 aa).

Belongs to the ATPase epsilon chain family. In terms of assembly, F-type ATPases have 2 components, CF(1) - the catalytic core - and CF(0) - the membrane proton channel. CF(1) has five subunits: alpha(3), beta(3), gamma(1), delta(1), epsilon(1). CF(0) has three main subunits: a, b and c.

The protein resides in the cell membrane. Functionally, produces ATP from ADP in the presence of a proton gradient across the membrane. In Polynucleobacter asymbioticus (strain DSM 18221 / CIP 109841 / QLW-P1DMWA-1) (Polynucleobacter necessarius subsp. asymbioticus), this protein is ATP synthase epsilon chain.